A 355-amino-acid chain; its full sequence is GTPase Obg (355 aa).

In terms of domain architecture, Obg spans 1-159 (MKFLDEAKVY…KTIWLRLKLI (159 aa)). One can recognise an OBG-type G domain in the interval 160-327 (ADAGLVGLPN…ALRALRDIIV (168 aa)). Residues 166–173 (GLPNAGKS), 191–195 (FTTLH), 212–215 (DIPG), 279–282 (SQID), and 308–310 (SAA) each bind GTP. Mg(2+)-binding residues include Ser173 and Thr193. The tract at residues 333 to 355 (GDTALPDRSMPHESEVEEEDDRL) is disordered.

Belongs to the TRAFAC class OBG-HflX-like GTPase superfamily. OBG GTPase family. Monomer. It depends on Mg(2+) as a cofactor.

It is found in the cytoplasm. Functionally, an essential GTPase which binds GTP, GDP and possibly (p)ppGpp with moderate affinity, with high nucleotide exchange rates and a fairly low GTP hydrolysis rate. Plays a role in control of the cell cycle, stress response, ribosome biogenesis and in those bacteria that undergo differentiation, in morphogenesis control. In Agrobacterium fabrum (strain C58 / ATCC 33970) (Agrobacterium tumefaciens (strain C58)), this protein is GTPase Obg.